We begin with the raw amino-acid sequence, 202 residues long: ATP-dependent Clp protease proteolytic subunit (202 aa).

Residue Ser-106 is the Nucleophile of the active site. Residue His-131 is part of the active site.

Belongs to the peptidase S14 family. As to quaternary structure, fourteen ClpP subunits assemble into 2 heptameric rings which stack back to back to give a disk-like structure with a central cavity, resembling the structure of eukaryotic proteasomes.

It localises to the cytoplasm. It carries out the reaction Hydrolysis of proteins to small peptides in the presence of ATP and magnesium. alpha-casein is the usual test substrate. In the absence of ATP, only oligopeptides shorter than five residues are hydrolyzed (such as succinyl-Leu-Tyr-|-NHMec, and Leu-Tyr-Leu-|-Tyr-Trp, in which cleavage of the -Tyr-|-Leu- and -Tyr-|-Trp bonds also occurs).. Cleaves peptides in various proteins in a process that requires ATP hydrolysis. Has a chymotrypsin-like activity. Plays a major role in the degradation of misfolded proteins. The sequence is that of ATP-dependent Clp protease proteolytic subunit from Shewanella oneidensis (strain ATCC 700550 / JCM 31522 / CIP 106686 / LMG 19005 / NCIMB 14063 / MR-1).